The chain runs to 376 residues: Response regulator aspartate phosphatase H (376 aa).

TPR repeat units lie at residues 99-132, 139-172, 180-213, 220-253, 259-292, and 334-367; these read YYSL…LPFV, AEFH…YQNH, IQSL…AMDI, AISL…SREK, PKVL…ITAR, and EACA…QEDI.

This sequence belongs to the Rap family. Homodimer. Interacts with phosphorylated Spo0F. Each RapH protomer is bound to a monomer of Spo0F, forming a heterotetrameric complex. May also interact with non-phosphorylated Spo0F to inhibit the sporulation phosphorelay. Interacts with the C-terminal DNA-binding region of ComA. Does not interact with DegU.

The protein localises to the cytoplasm. With respect to regulation, both activities are inhibited by RapH. Functionally, dual specificity regulatory protein that can control both sporulation and competence by acting on two distinct response regulators: Spo0F and ComA, respectively. Is involved in the temporal separation of competence and sporulation. Acts as a phosphatase that specifically dephosphorylates the sporulation initiation phosphotransferase Spo0F and inhibits its activity. RapH can also antagonize sporulation by sterically blocking phosphoryl transfer to and from Spo0F. In addition, inhibits the activity of ComA, a transcriptional factor that regulates the development of genetic competence. Acts by binding to ComA, leading to the inhibition of its DNA-binding activity. This chain is Response regulator aspartate phosphatase H (rapH), found in Bacillus subtilis (strain 168).